We begin with the raw amino-acid sequence, 297 residues long: Trans-enoyl reductase TOXD (297 aa).

NADP(+)-binding positions include 162-165 and tyrosine 203; that span reads STAT.

This sequence belongs to the zinc-containing alcohol dehydrogenase family. As to quaternary structure, monomer.

Its function is as follows. Trans-enoyl reductase; part of the diffuse TOX2 gene cluster that mediates the biosynthesis of the HC-toxin, cyclic tetrapeptide of structure cyclo(D-Pro-L-Ala-D-Ala-L-Aeo), where Aeo stands for 2-amino-9,10-epoxi-8-oxodecanoic acid. HC-toxin is a determinant of specificity and virulence in the interaction between the producing fungus and its host, maize. TOXD does not seem to play a role in HC-toxin biosynthesis. The chain is Trans-enoyl reductase TOXD from Cochliobolus carbonum (Maize leaf spot fungus).